The following is a 229-amino-acid chain: Nisin biosynthesis regulatory protein NisR (229 aa).

A Response regulatory domain is found at 4–117 (KILIVDDDQE…QLVAKVEANI (114 aa)). The residue at position 53 (D53) is a 4-aspartylphosphate. Positions 132 to 229 (EIRRDLGPIT…VRGLGYQWHG (98 aa)) form a DNA-binding region, ompR/PhoB-type.

Post-translationally, phosphorylated by NisK.

In terms of biological role, member of the two-component regulatory system NisK/NisR involved in the regulation of the biosynthesis of lantibiotic nisin. NisR may function as a regulatory protein. This Lactococcus lactis subsp. lactis (Streptococcus lactis) protein is Nisin biosynthesis regulatory protein NisR (nisR).